The following is a 791-amino-acid chain: Cullin-2 (791 aa).

The region spanning 722-784 is the Cullin neddylation domain; that stretch reads DRKYYMECAI…KMYIQRTDQN (63 aa). Residue Lys-736 forms a Glycyl lysine isopeptide (Lys-Gly) (interchain with G-Cter in NEDD8) linkage.

Belongs to the cullin family. As to quaternary structure, component of multiple CBC (Cul2-ElonginB-ElonginC) E3 ubiquitin-protein ligase complexes formed of cul-2, elb-1, elc-1, rbx-1 and a variable substrate recognition component. Component of the CBC(fem-1) E3 ubiquitin-protein ligase complex with fem-1, fem-2 and fem-3. The CBC(fem-1) complex interacts with tra-1 and promotes tra-1 degradation. Probable component of the CBC(lrr-1) E3 ubiquitin-protein ligase complex incuding cul-2, elb-1, elc-1, rbx-1 and lrr-1. The CBC(lrr-1) complex interacts with the DNA replisome complex at the end of S phase; the interaction promotes the release of components of the CMG helicase complex (a component of the replisome) from chromatin. Probable component of an CBC(zif-1) E3 ubiquitin-protein ligase including cul-2, elc-1, rbx-1 and zif-1. Part of an E3 ubiquitin-protein ligase complex including cul-2, elc-1 and zyg-11. Interacts with Skp1-related protein skr-10. Post-translationally, neddylated; which enhances the ubiquitination activity of CBC (Cul2-ElonginB-ElonginC) E3 ubiquitin-protein ligase complexes. As to expression, in adults, highly expressed in meiotic cells and oocytes. In larvae, expressed in many proliferating cell types: P cells during the L1 stage; seam cells when they divide at every molt; vulval and somatic gonad cells in late L3 and L4 stages; and intestinal cells throughout larval development.

It localises to the cytoplasm. It is found in the nucleus. Its pathway is protein modification; protein ubiquitination. Its function is as follows. Core component of multiple cullin-RING-based CBC (Cul2-ElonginB-ElonginC) E3 ubiquitin-protein ligase complexes which mediate the ubiquitination and subsequent proteasomal degradation of target proteins. As a scaffold protein may contribute to catalysis through positioning of the substrate and the ubiquitin-conjugating enzyme. The functional specificity of the CBC complex depends on the variable substrate recognition component. May function in ubiquitin-mediated degradation of CKIs to target cki-1 for degradation. CBC(zif-1) may ensure germline precursor cell asymmetry by targeting germline proteins for destruction if expressed in non-germline cells. As part of the CBC(fem-1) complex directs ubiquitination of tra-1. As part of the CBC(lrr-1) complex, required for the ubiquitination and dissasembly of the CMG helicase complex from chromatin at the end of DNA replication. Positive cell-cycle regulator that is required at two distinct points in the cell cycle; the G1-to-S-phase transition and mitosis. Also required for proper cytoskeletal movement and mitotic chromosome condensation. In Caenorhabditis elegans, this protein is Cullin-2.